Here is a 290-residue protein sequence, read N- to C-terminus: MDYKHFKGKHANIVIEIISLLEKGVKKAQEILEKPDAGSYTKLENSSGDTPIKADLALDKFLEENFLSLENVKSVFSEEKETPVTKENGSYLIAYDPLDGSSVMEANFLVGTIIGVYEKDYKAQNLAASLYVVFGHKIELVVALEEVYRYGFYQNKFHFIETIVLENKGKIIASGGNQKDFSSGLKKALEGFFAENYRLRYSGSMVADVHHVLIKKGGMFSYPQKKLRKLFEVFPLALMVEKAKGEAFYFDKGVKKRLLEQSVESYHEKSECYLASQHEAHILEKYLKGE.

Residues Glu-78, Asp-96, Leu-98, and Asp-99 each coordinate Mg(2+). Substrate contacts are provided by residues 99–102 (DGSS), Tyr-201, and Lys-226. Mg(2+) is bound at residue Glu-232.

This sequence belongs to the FBPase class 1 family. In terms of assembly, homotetramer. Mg(2+) serves as cofactor.

The protein localises to the cytoplasm. The catalysed reaction is beta-D-fructose 1,6-bisphosphate + H2O = beta-D-fructose 6-phosphate + phosphate. The protein operates within carbohydrate biosynthesis; gluconeogenesis. This Helicobacter pylori (strain Shi470) protein is Fructose-1,6-bisphosphatase class 1.